We begin with the raw amino-acid sequence, 115 residues long: Small ribosomal subunit protein bS6 (115 aa).

It belongs to the bacterial ribosomal protein bS6 family.

Functionally, binds together with bS18 to 16S ribosomal RNA. The polypeptide is Small ribosomal subunit protein bS6 (Picosynechococcus sp. (strain ATCC 27264 / PCC 7002 / PR-6) (Agmenellum quadruplicatum)).